The chain runs to 430 residues: Adenylosuccinate synthetase (430 aa).

GTP is bound by residues 12–18 and 40–42; these read GDEGKGK and GHT. Asp-13 (proton acceptor) is an active-site residue. Residues Asp-13 and Gly-40 each contribute to the Mg(2+) site. IMP is bound by residues 13 to 16, 38 to 41, Thr-130, Arg-144, Gln-224, Thr-239, and Arg-303; these read DEGK and NAGH. His-41 functions as the Proton donor in the catalytic mechanism. Position 299 to 305 (299 to 305) interacts with substrate; it reads VNTGRKR. GTP contacts are provided by residues Arg-305, 331-333, and 413-415; these read KLD and STS.

The protein belongs to the adenylosuccinate synthetase family. In terms of assembly, homodimer. Requires Mg(2+) as cofactor.

The protein resides in the cytoplasm. The catalysed reaction is IMP + L-aspartate + GTP = N(6)-(1,2-dicarboxyethyl)-AMP + GDP + phosphate + 2 H(+). The protein operates within purine metabolism; AMP biosynthesis via de novo pathway; AMP from IMP: step 1/2. Its function is as follows. Plays an important role in the de novo pathway of purine nucleotide biosynthesis. Catalyzes the first committed step in the biosynthesis of AMP from IMP. The sequence is that of Adenylosuccinate synthetase from Nitrobacter winogradskyi (strain ATCC 25391 / DSM 10237 / CIP 104748 / NCIMB 11846 / Nb-255).